The following is an 878-amino-acid chain: Protein translocase subunit SecA (878 aa).

ATP is bound by residues Q79, 97–101, and D487; that span reads GEGKT.

Belongs to the SecA family.

The protein resides in the plastid. It localises to the chloroplast stroma. Its subcellular location is the chloroplast thylakoid membrane. The enzyme catalyses ATP + H2O + cellular proteinSide 1 = ADP + phosphate + cellular proteinSide 2.. Has a central role in coupling the hydrolysis of ATP to the transfer of proteins across the thylakoid membrane. This chain is Protein translocase subunit SecA, found in Antithamnion sp. (Red alga).